The chain runs to 170 residues: 4-hydroxyphenylacetate 3-monooxygenase reductase component (170 aa).

The protein belongs to the non-flavoprotein flavin reductase family. HpaC subfamily. As to quaternary structure, homodimer. 4-HPA 3-monooxygenase consists of a reductase component HpaC and an oxygenase component HpaB.

It carries out the reaction a reduced flavin + NAD(+) = an oxidized flavin + NADH + 2 H(+). It participates in aromatic compound metabolism; 4-hydroxyphenylacetate degradation; pyruvate and succinate semialdehyde from 4-hydroxyphenylacetate: step 1/7. Its function is as follows. Catalyzes the reduction of free flavins (FMN, FAD and riboflavin) by NADH. Subsequently, the reduced flavins diffuse to the large HpaB component or to other electron acceptors such as cytochrome c and Fe(3+) ion. This Escherichia coli protein is 4-hydroxyphenylacetate 3-monooxygenase reductase component (hpaC).